The following is a 202-amino-acid chain: Outer-membrane lipoprotein carrier protein (202 aa).

Positions M1–S18 are cleaved as a signal peptide.

The protein belongs to the LolA family. In terms of assembly, monomer.

The protein localises to the periplasm. Participates in the translocation of lipoproteins from the inner membrane to the outer membrane. Only forms a complex with a lipoprotein if the residue after the N-terminal Cys is not an aspartate (The Asp acts as a targeting signal to indicate that the lipoprotein should stay in the inner membrane). This Legionella pneumophila (strain Lens) protein is Outer-membrane lipoprotein carrier protein.